The following is a 178-amino-acid chain: MGKIIFYDDRNFQGRSYDCMSDCSDISSYLSRVGSIRVESGCFMVYERNSYMGNQFFLRRGEYHDMQRMMSMGMIFDTIRSCRMIPPYRGSYRMRIYERDNFGGQMHEVMDDCDNIMERYRMSDWQSCHVMDGHWLFYEQPHYRGRMWYFRPGEYRSFRDMGYSNMRFMSMRRITDIC.

Beta/gamma crystallin 'Greek key' domains lie at 2-40 and 41-86; these read GKII…RVES and GCFM…RMIP. The interval 87–91 is connecting peptide; it reads PYRGS. Beta/gamma crystallin 'Greek key' domains are found at residues 92–132 and 133–175; these read YRMR…HVMD and GHWL…RRIT.

The protein belongs to the beta/gamma-crystallin family. As to quaternary structure, monomer.

Functionally, crystallins are the dominant structural components of the vertebrate eye lens. The protein is Gamma-crystallin M1 of Cyprinus carpio (Common carp).